We begin with the raw amino-acid sequence, 1165 residues long: DNA-directed RNA polymerase subunit beta (1165 aa).

It belongs to the RNA polymerase beta chain family. The RNAP catalytic core consists of 2 alpha, 1 beta, 1 beta' and 1 omega subunit. When a sigma factor is associated with the core the holoenzyme is formed, which can initiate transcription.

The enzyme catalyses RNA(n) + a ribonucleoside 5'-triphosphate = RNA(n+1) + diphosphate. Its function is as follows. DNA-dependent RNA polymerase catalyzes the transcription of DNA into RNA using the four ribonucleoside triphosphates as substrates. This Leifsonia xyli subsp. xyli (strain CTCB07) protein is DNA-directed RNA polymerase subunit beta.